Consider the following 445-residue polypeptide: Argininosuccinate synthase (445 aa).

Residues 17–25 and Ala-43 contribute to the ATP site; that span reads AFSGGLDTS. An L-citrulline-binding site is contributed by Tyr-99. ATP is bound by residues Gly-129 and Thr-131. Positions 131, 135, and 136 each coordinate L-aspartate. Asn-135 contacts L-citrulline. Asp-136 is an ATP binding site. Residues Arg-139 and Ser-192 each coordinate L-citrulline. Asp-194 is an ATP binding site. Thr-201, Glu-203, and Glu-280 together coordinate L-citrulline.

This sequence belongs to the argininosuccinate synthase family. Type 2 subfamily. In terms of assembly, homotetramer.

Its subcellular location is the cytoplasm. It catalyses the reaction L-citrulline + L-aspartate + ATP = 2-(N(omega)-L-arginino)succinate + AMP + diphosphate + H(+). The protein operates within amino-acid biosynthesis; L-arginine biosynthesis; L-arginine from L-ornithine and carbamoyl phosphate: step 2/3. The chain is Argininosuccinate synthase from Rhodopseudomonas palustris (strain BisA53).